Consider the following 131-residue polypeptide: Holo-[acyl-carrier-protein] synthase (131 aa).

Residues D6 and E55 each coordinate Mg(2+).

It belongs to the P-Pant transferase superfamily. AcpS family. The cofactor is Mg(2+).

It is found in the cytoplasm. It carries out the reaction apo-[ACP] + CoA = holo-[ACP] + adenosine 3',5'-bisphosphate + H(+). In terms of biological role, transfers the 4'-phosphopantetheine moiety from coenzyme A to a Ser of acyl-carrier-protein. This chain is Holo-[acyl-carrier-protein] synthase, found in Verminephrobacter eiseniae (strain EF01-2).